The following is a 299-amino-acid chain: Phosphoribosylaminoimidazole-succinocarboxamide synthase (299 aa).

Belongs to the SAICAR synthetase family.

It carries out the reaction 5-amino-1-(5-phospho-D-ribosyl)imidazole-4-carboxylate + L-aspartate + ATP = (2S)-2-[5-amino-1-(5-phospho-beta-D-ribosyl)imidazole-4-carboxamido]succinate + ADP + phosphate + 2 H(+). It participates in purine metabolism; IMP biosynthesis via de novo pathway; 5-amino-1-(5-phospho-D-ribosyl)imidazole-4-carboxamide from 5-amino-1-(5-phospho-D-ribosyl)imidazole-4-carboxylate: step 1/2. In Maridesulfovibrio salexigens (strain ATCC 14822 / DSM 2638 / NCIMB 8403 / VKM B-1763) (Desulfovibrio salexigens), this protein is Phosphoribosylaminoimidazole-succinocarboxamide synthase.